A 282-amino-acid polypeptide reads, in one-letter code: DegV domain-containing protein SpyM3_0586 (282 aa).

Residues 3 to 280 enclose the DegV domain; the sequence is LAVITDSTAT…EGAIAFGVTP (278 aa). Hexadecanoate-binding residues include Thr-61 and Ser-94.

May bind long-chain fatty acids, such as palmitate, and may play a role in lipid transport or fatty acid metabolism. The chain is DegV domain-containing protein SpyM3_0586 from Streptococcus pyogenes serotype M3 (strain ATCC BAA-595 / MGAS315).